The sequence spans 244 residues: tRNA pseudouridine synthase A (244 aa).

The Nucleophile role is filled by Asp55. A substrate-binding site is contributed by Tyr113.

This sequence belongs to the tRNA pseudouridine synthase TruA family. As to quaternary structure, homodimer.

It catalyses the reaction uridine(38/39/40) in tRNA = pseudouridine(38/39/40) in tRNA. Its function is as follows. Formation of pseudouridine at positions 38, 39 and 40 in the anticodon stem and loop of transfer RNAs. This Phytoplasma mali (strain AT) protein is tRNA pseudouridine synthase A.